Reading from the N-terminus, the 150-residue chain is D-aminoacyl-tRNA deacylase (150 aa).

Positions 138–139 match the Gly-cisPro motif, important for rejection of L-amino acids motif; it reads GP.

This sequence belongs to the DTD family. In terms of assembly, homodimer.

The protein localises to the cytoplasm. It catalyses the reaction glycyl-tRNA(Ala) + H2O = tRNA(Ala) + glycine + H(+). The catalysed reaction is a D-aminoacyl-tRNA + H2O = a tRNA + a D-alpha-amino acid + H(+). Its function is as follows. An aminoacyl-tRNA editing enzyme that deacylates mischarged D-aminoacyl-tRNAs. Also deacylates mischarged glycyl-tRNA(Ala), protecting cells against glycine mischarging by AlaRS. Acts via tRNA-based rather than protein-based catalysis; rejects L-amino acids rather than detecting D-amino acids in the active site. By recycling D-aminoacyl-tRNA to D-amino acids and free tRNA molecules, this enzyme counteracts the toxicity associated with the formation of D-aminoacyl-tRNA entities in vivo and helps enforce protein L-homochirality. This Chromobacterium violaceum (strain ATCC 12472 / DSM 30191 / JCM 1249 / CCUG 213 / NBRC 12614 / NCIMB 9131 / NCTC 9757 / MK) protein is D-aminoacyl-tRNA deacylase.